Reading from the N-terminus, the 700-residue chain is Putative ankyrin repeat protein FPV018 (700 aa).

ANK repeat units follow at residues D29 to M59, N63 to G92, R126 to M155, M204 to T233, A236 to S265, N270 to I299, D301 to C332, C395 to V424, Y428 to E457, Y461 to Q490, and D494 to F523.

The sequence is that of Putative ankyrin repeat protein FPV018 from Fowlpox virus (strain NVSL) (FPV).